Reading from the N-terminus, the 211-residue chain is 3-demethoxyubiquinol 3-hydroxylase (211 aa).

Fe cation-binding residues include glutamate 60, glutamate 90, histidine 93, glutamate 142, glutamate 174, and histidine 177.

Belongs to the COQ7 family. Requires Fe cation as cofactor.

Its subcellular location is the cell membrane. The enzyme catalyses a 5-methoxy-2-methyl-3-(all-trans-polyprenyl)benzene-1,4-diol + AH2 + O2 = a 3-demethylubiquinol + A + H2O. The protein operates within cofactor biosynthesis; ubiquinone biosynthesis. Functionally, catalyzes the hydroxylation of 2-nonaprenyl-3-methyl-6-methoxy-1,4-benzoquinol during ubiquinone biosynthesis. The sequence is that of 3-demethoxyubiquinol 3-hydroxylase from Francisella tularensis subsp. holarctica (strain FTNF002-00 / FTA).